We begin with the raw amino-acid sequence, 327 residues long: MATAVEYETLYTGQKIPLIGLGTWKSAPGQVKDAVKYALGVGYRHIDCAFVYGNETEVGEAIKESVGSDKGLSREEVFVTSKLWNNKHHPDDVECALRKTLQDLQLDYLDLYLMHWPYAFKRGDQIFPQNPDGSVQYDLTDYKDTWKAMEKLVKQGLTKAIGLSNFNKRQIDDIISIATVKPAVLQVECHPYLAQNELIAYCHAHGLVFTGYSPLGSPDRSWRKPEDPVLLEEPGIIAMAKKYGKSEAQILLRWQVQRKVVSIPKSVTPTRILQNFQVFDFSLSEEEMQLIGALNKNWRYIIPLITVNGKSVPRDAGHPLYPFNDPY.

Residues 13 to 22, Thr23, Trp24, and Asp47 contribute to the NADP(+) site; that span reads GQKIPLIGLG. Catalysis depends on Tyr52, which acts as the Proton donor. The NADP(+) site is built by Ser164, Asn165, Ser213, Leu215, Ser217, Lys265, Ser266, Val267, Thr268, Arg271, Gln274, and Asn275.

This sequence belongs to the aldo/keto reductase family.

The protein resides in the cytoplasm. It is found in the cytosol. It localises to the apical cell membrane. The enzyme catalyses a primary alcohol + NADP(+) = an aldehyde + NADPH + H(+). It carries out the reaction S-nitroso-CoA + NADPH + H(+) = sulfinamide-CoA + NADP(+). The catalysed reaction is S-nitrosoglutathione + NADPH + H(+) = S-(hydroxysulfenamide)glutathione + NADP(+). In terms of biological role, catalyzes the NADPH-dependent reduction of a wide variety of carbonyl-containing compounds to their corresponding alcohols. Displays enzymatic activity towards endogenous metabolites such as aromatic and aliphatic aldehydes, ketones, monosaccharides and bile acids. Acts as an aldehyde-detoxification enzyme. Also acts as an inhibitor of protein S-nitrosylation by mediating degradation of S-nitroso-coenzyme A (S-nitroso-CoA), a cofactor required to S-nitrosylate proteins. Also acts as a S-nitroso-glutathione reductase by catalyzing the NADPH-dependent reduction of S-nitrosoglutathione. Displays no reductase activity towards retinoids. In Xenopus tropicalis (Western clawed frog), this protein is Aldo-keto reductase family 1 member A1 (akr1a1).